Reading from the N-terminus, the 634-residue chain is Dachshund homolog 2 (634 aa).

The segment at R76–L162 is DACHbox-N. 3 disordered regions span residues R171–L194, L244–Q286, and I378–H416. Over residues L244 to S269 the composition is skewed to polar residues. Low complexity predominate over residues S396–Q412. The tract at residues S488–L568 is DACHbox-C. Residues L494 to G588 adopt a coiled-coil conformation.

The protein belongs to the DACH/dachshund family. As to quaternary structure, interacts with SIX6. Interacts with EYA2. In terms of tissue distribution, expressed in embryo, and at lower levels in the newborn.

The protein localises to the nucleus. Transcription factor that is involved in regulation of organogenesis. Seems to be a regulator for SIX1 and SIX6. Seems to act as a corepressor of SIX6 in regulating proliferation by directly repressing cyclin-dependent kinase inhibitors, including the p27Kip1 promoter. Is recruited with SIX6 to the p27Kip1 promoter in embryonal retina. SIX6 corepression also seems to involve NCOR1, TBL1, HDAC1 and HDAC3. May be involved together with PAX3, SIX1, and EYA2 in regulation of myogenesis. In the developing somite, expression of DACH2 and PAX3 is regulated by the overlying ectoderm, and DACH2 and PAX3 positively regulate each other's expression. Probably binds to DNA via its DACHbox-N domain. In Mus musculus (Mouse), this protein is Dachshund homolog 2 (Dach2).